The primary structure comprises 558 residues: Dihydroxy-acid dehydratase (558 aa).

Aspartate 78 contributes to the Mg(2+) binding site. A [2Fe-2S] cluster-binding site is contributed by cysteine 119. Aspartate 120 and lysine 121 together coordinate Mg(2+). N6-carboxylysine is present on lysine 121. Residue cysteine 192 participates in [2Fe-2S] cluster binding. Glutamate 446 serves as a coordination point for Mg(2+). Residue serine 472 is the Proton acceptor of the active site.

This sequence belongs to the IlvD/Edd family. Homodimer. Requires [2Fe-2S] cluster as cofactor. Mg(2+) is required as a cofactor.

The catalysed reaction is (2R)-2,3-dihydroxy-3-methylbutanoate = 3-methyl-2-oxobutanoate + H2O. It catalyses the reaction (2R,3R)-2,3-dihydroxy-3-methylpentanoate = (S)-3-methyl-2-oxopentanoate + H2O. It functions in the pathway amino-acid biosynthesis; L-isoleucine biosynthesis; L-isoleucine from 2-oxobutanoate: step 3/4. Its pathway is amino-acid biosynthesis; L-valine biosynthesis; L-valine from pyruvate: step 3/4. Functionally, functions in the biosynthesis of branched-chain amino acids. Catalyzes the dehydration of (2R,3R)-2,3-dihydroxy-3-methylpentanoate (2,3-dihydroxy-3-methylvalerate) into 2-oxo-3-methylpentanoate (2-oxo-3-methylvalerate) and of (2R)-2,3-dihydroxy-3-methylbutanoate (2,3-dihydroxyisovalerate) into 2-oxo-3-methylbutanoate (2-oxoisovalerate), the penultimate precursor to L-isoleucine and L-valine, respectively. This is Dihydroxy-acid dehydratase from Campylobacter jejuni subsp. doylei (strain ATCC BAA-1458 / RM4099 / 269.97).